Here is a 636-residue protein sequence, read N- to C-terminus: Carbon monoxide dehydrogenase 1 (636 aa).

Cysteine 38, cysteine 46, cysteine 47, cysteine 50, cysteine 55, and cysteine 69 together coordinate [4Fe-4S] cluster. [Ni-4Fe-5S] cluster contacts are provided by histidine 262, cysteine 297, cysteine 335, cysteine 448, cysteine 478, and cysteine 528.

It belongs to the Ni-containing carbon monoxide dehydrogenase family. Homodimer. [4Fe-4S] cluster serves as cofactor. The cofactor is [Ni-4Fe-5S] cluster.

The protein localises to the cytoplasm. It localises to the cell membrane. It catalyses the reaction CO + 2 oxidized [2Fe-2S]-[ferredoxin] + H2O = 2 reduced [2Fe-2S]-[ferredoxin] + CO2 + 2 H(+). With respect to regulation, inactivated by O(2). In terms of biological role, CODH oxidizes carbon monoxide coupled, via CooF, to the reduction of a hydrogen cation by a hydrogenase (possibly CooH). The chain is Carbon monoxide dehydrogenase 1 (cooS1) from Carboxydothermus hydrogenoformans (strain ATCC BAA-161 / DSM 6008 / Z-2901).